Consider the following 434-residue polypeptide: Nicotinate phosphoribosyltransferase (434 aa).

Phosphohistidine; by autocatalysis is present on His-242.

Belongs to the NAPRTase family. In terms of processing, transiently phosphorylated on a His residue during the reaction cycle. Phosphorylation strongly increases the affinity for substrates and increases the rate of nicotinate D-ribonucleotide production. Dephosphorylation regenerates the low-affinity form of the enzyme, leading to product release.

The enzyme catalyses nicotinate + 5-phospho-alpha-D-ribose 1-diphosphate + ATP + H2O = nicotinate beta-D-ribonucleotide + ADP + phosphate + diphosphate. The protein operates within cofactor biosynthesis; NAD(+) biosynthesis; nicotinate D-ribonucleotide from nicotinate: step 1/1. Its function is as follows. Catalyzes the synthesis of beta-nicotinate D-ribonucleotide from nicotinate and 5-phospho-D-ribose 1-phosphate at the expense of ATP. This is Nicotinate phosphoribosyltransferase from Bradyrhizobium sp. (strain BTAi1 / ATCC BAA-1182).